Reading from the N-terminus, the 518-residue chain is Triacylglycerol lipase OBL1 (518 aa).

A helical membrane pass occupies residues 93–113; it reads GFVVDFFLNLFSANGGFFGLL. Residues 337 to 341 carry the GXSXG motif; that stretch reads GHSLG. Catalysis depends on Ser339, which acts as the Nucleophile. Active-site charge relay system residues include Asp403 and His496.

Belongs to the AB hydrolase superfamily. Lipase family. In terms of tissue distribution, expressed in pollen grains, pollen tubes, developing embryos, developing seeds and germinating seeds.

It is found in the lipid droplet. Its subcellular location is the membrane. It carries out the reaction 1,2-di-(9Z-octadecenoyl)-glycerol + (9Z)-octadecenoate + H(+) = 1,2,3-tri-(9Z-octadecenoyl)-glycerol + H2O. The enzyme catalyses 1-(9Z-octadecenoyl)-glycerol + H2O = glycerol + (9Z)-octadecenoate + H(+). In terms of biological role, acid lipase that can hydrolyze a range of triacylglycerols without a clear preference for acyl-chains. Can also cleave 1,2-diacylglycerol, 1,3-diacylglycerol and 1-monoacylglycerol, but not phosphatidylcholine, phosphatidylethanolamine, or sterol esters. Required for pollen tube growth. Triacylglycerol hydrolysis by OBL1 may provide acyl groups for the synthesis of membrane lipids in growing pollen tubes. The sequence is that of Triacylglycerol lipase OBL1 from Arabidopsis thaliana (Mouse-ear cress).